The primary structure comprises 157 residues: Small ribosomal subunit protein uS7 (157 aa).

The protein belongs to the universal ribosomal protein uS7 family. As to quaternary structure, part of the 30S ribosomal subunit. Contacts proteins S9 and S11.

One of the primary rRNA binding proteins, it binds directly to 16S rRNA where it nucleates assembly of the head domain of the 30S subunit. Is located at the subunit interface close to the decoding center, probably blocks exit of the E-site tRNA. This Eikenella corrodens protein is Small ribosomal subunit protein uS7.